The sequence spans 151 residues: Deoxyuridine 5'-triphosphate nucleotidohydrolase (151 aa).

Substrate is bound by residues 70-72, N83, 87-89, and M97; these read RSG and LID.

This sequence belongs to the dUTPase family. Mg(2+) is required as a cofactor.

It carries out the reaction dUTP + H2O = dUMP + diphosphate + H(+). Its pathway is pyrimidine metabolism; dUMP biosynthesis; dUMP from dCTP (dUTP route): step 2/2. This enzyme is involved in nucleotide metabolism: it produces dUMP, the immediate precursor of thymidine nucleotides and it decreases the intracellular concentration of dUTP so that uracil cannot be incorporated into DNA. This is Deoxyuridine 5'-triphosphate nucleotidohydrolase from Glaesserella parasuis serovar 5 (strain SH0165) (Haemophilus parasuis).